The following is a 457-amino-acid chain: Amidophosphoribosyltransferase (457 aa).

Cys-2 (nucleophile) is an active-site residue. One can recognise a Glutamine amidotransferase type-2 domain in the interval 2-223 (CGVVGIYHPD…PGKAAIIKDG (222 aa)). [4Fe-4S] cluster is bound at residue Cys-239. Mg(2+)-binding residues include Ser-286, Asp-348, and Asp-349. [4Fe-4S] cluster-binding residues include Cys-385, Cys-438, and Cys-441.

This sequence in the C-terminal section; belongs to the purine/pyrimidine phosphoribosyltransferase family. Requires Mg(2+) as cofactor. [4Fe-4S] cluster is required as a cofactor.

The catalysed reaction is 5-phospho-beta-D-ribosylamine + L-glutamate + diphosphate = 5-phospho-alpha-D-ribose 1-diphosphate + L-glutamine + H2O. The protein operates within purine metabolism; IMP biosynthesis via de novo pathway; N(1)-(5-phospho-D-ribosyl)glycinamide from 5-phospho-alpha-D-ribose 1-diphosphate: step 1/2. In terms of biological role, catalyzes the formation of phosphoribosylamine from phosphoribosylpyrophosphate (PRPP) and glutamine. The protein is Amidophosphoribosyltransferase of Archaeoglobus fulgidus (strain ATCC 49558 / DSM 4304 / JCM 9628 / NBRC 100126 / VC-16).